A 162-amino-acid polypeptide reads, in one-letter code: MTRKQRRLTMIGGALVVLGIAAALVLNALRDSIVFFSTPMMVSEKHIQPGQRFRLGGLVQTGSLVRGDNLAVSFRVSDGSATLPVSYKGILPDLFREGQGVVAEGALDNSGVFQADTVLAKHDETYMPKEVADALKKQGHWKDDYGAQPGAAEASSKQEVSQ.

Topologically, residues 1 to 7 are cytoplasmic; that stretch reads MTRKQRR. Residues 8-28 traverse the membrane as a helical; Signal-anchor for type II membrane protein segment; the sequence is LTMIGGALVVLGIAAALVLNA. Residues 29 to 162 lie on the Periplasmic side of the membrane; it reads LRDSIVFFST…EASSKQEVSQ (134 aa). His122 and Tyr126 together coordinate heme. Residues 140 to 162 are disordered; the sequence is HWKDDYGAQPGAAEASSKQEVSQ.

The protein belongs to the CcmE/CycJ family.

The protein localises to the cell inner membrane. Functionally, heme chaperone required for the biogenesis of c-type cytochromes. Transiently binds heme delivered by CcmC and transfers the heme to apo-cytochromes in a process facilitated by CcmF and CcmH. In Nitrobacter winogradskyi (strain ATCC 25391 / DSM 10237 / CIP 104748 / NCIMB 11846 / Nb-255), this protein is Cytochrome c-type biogenesis protein CcmE.